Reading from the N-terminus, the 179-residue chain is Hypoxanthine phosphoribosyltransferase (179 aa).

Residues Arg-45 and Gly-46 each coordinate diphosphate. Residue Glu-101 participates in GMP binding. Residue Glu-101 coordinates IMP. Glu-101 and Asp-102 together coordinate Mg(2+). Residue Asp-105 is the Proton acceptor of the active site. GMP-binding positions include 105–110 (DTGYTL), Lys-133, and Asp-161. IMP-binding positions include 105–110 (DTGYTL) and Lys-133. Arg-167 contacts diphosphate.

This sequence belongs to the purine/pyrimidine phosphoribosyltransferase family. As to quaternary structure, homotetramer. Mg(2+) serves as cofactor.

The protein localises to the cytoplasm. It catalyses the reaction IMP + diphosphate = hypoxanthine + 5-phospho-alpha-D-ribose 1-diphosphate. It carries out the reaction GMP + diphosphate = guanine + 5-phospho-alpha-D-ribose 1-diphosphate. It participates in purine metabolism; IMP biosynthesis via salvage pathway; IMP from hypoxanthine: step 1/1. Functionally, purine salvage pathway enzyme which catalyzes the transfer of the ribosyl-5-phosphate group from 5-phospho-alpha-D-ribose 1-diphosphate (PRPP) to the N9 position of hypoxanthine to yield IMP (inosine 5'-monophosphate). To a lesser extent, can also act on guanine leading to GMP, but shows a highly less efficient activity with xanthine. The chain is Hypoxanthine phosphoribosyltransferase (hpt) from Haemophilus influenzae (strain ATCC 51907 / DSM 11121 / KW20 / Rd).